The primary structure comprises 665 residues: Methionine--tRNA ligase (665 aa).

Residues 12-22 (YYPSGKLHIGS) carry the 'HIGH' region motif. A 'KMSKS' region motif is present at residues 308–312 (KMSKS). K311 is a binding site for ATP. The tRNA-binding domain maps to 562-665 (TFDAVEIRVA…SSVPNGSIIG (104 aa)).

Belongs to the class-I aminoacyl-tRNA synthetase family. MetG type 2B subfamily. As to quaternary structure, homodimer.

The protein localises to the cytoplasm. It carries out the reaction tRNA(Met) + L-methionine + ATP = L-methionyl-tRNA(Met) + AMP + diphosphate. In terms of biological role, is required not only for elongation of protein synthesis but also for the initiation of all mRNA translation through initiator tRNA(fMet) aminoacylation. The protein is Methionine--tRNA ligase (metG) of Streptococcus pyogenes serotype M3 (strain SSI-1).